Here is a 595-residue protein sequence, read N- to C-terminus: Torsin-1A-interacting protein 1 (595 aa).

Positions 1-221 (MAGERWQAEG…GNTKTNEREA (221 aa)) are disordered. Residues 1–351 (MAGERWQAEG…NEPSVKIKWW (351 aa)) are Nuclear-facing. A compositionally biased stretch (basic and acidic residues) spans 24–38 (PIREGRRRLDPRNGD). Residue Ser-60 is modified to Phosphoserine. Composition is skewed to basic and acidic residues over residues 70 to 101 (FEPRAAKERSPGGRRTPPEKFRPASAGEEVRE) and 115 to 132 (RAQEAEEMKTRRSARLEQ). A compositionally biased stretch (polar residues) spans 133-143 (HSQQPQLSPAT). 6 positions are modified to phosphoserine: Ser-134, Ser-140, Ser-151, Ser-153, Ser-154, and Ser-155. Polar residues predominate over residues 204–215 (LDSTYQTNGNTK). Thr-235 carries the phosphothreonine modification. A phosphoserine mark is found at Ser-241, Ser-244, and Ser-255. Disordered regions lie at residues 250 to 286 (ARSSDSLESRDEATPAAGNHPDSLRGLPHNQDFPAHE) and 319 to 340 (IQKSNFGNQSPSTSRPQSAIHH). Positions 251-262 (RSSDSLESRDEA) are enriched in basic and acidic residues. The span at 319–335 (IQKSNFGNQSPSTSRPQ) shows a compositional bias: polar residues. A Glycyl lysine isopeptide (Lys-Gly) (interchain with G-Cter in SUMO2) cross-link involves residue Lys-321. Position 328 is a phosphoserine (Ser-328). The chain crosses the membrane as a helical span at residues 352–372 (LLGLVAILAVGLFWFFHTPAV). Positions 368–595 (HTPAVETTAV…ENTLKAGSCL (228 aa)) are interaction with TOR1A. A coiled-coil region spans residues 373 to 400 (ETTAVQEFQNQMKQLQSKYQSQNEKLWK). Residues 373–595 (ETTAVQEFQN…ENTLKAGSCL (223 aa)) are Perinuclear space-facing. A glycan (N-linked (GlcNAc...) asparagine) is linked at Asn-411.

The protein belongs to the TOR1AIP family. As to quaternary structure, interacts with ATP1B4. Interacts with TOR1A (ATP-bound). Interacts with TOR1B, TOR2A and TOR3A. Interacts with VIM. As to expression, expressed in the spinal cord and liver (at protein level).

It is found in the nucleus inner membrane. In terms of biological role, required for nuclear membrane integrity. Induces TOR1A and TOR1B ATPase activity and is required for their location on the nuclear membrane. Binds to A- and B-type lamins. Possible role in membrane attachment and assembly of the nuclear lamina. This is Torsin-1A-interacting protein 1 (Tor1aip1) from Mus musculus (Mouse).